Here is a 536-residue protein sequence, read N- to C-terminus: Coilin (536 aa).

The disordered stretch occupies residues 96–316 (AETCNDGAQN…QHSQSPTSDS (221 aa)). Basic residues predominate over residues 171–180 (KTHKGKRTKK). A compositionally biased stretch (basic and acidic residues) spans 181-192 (KSEAPIENPPDK). Over residues 213–238 (QTSSSDSSDTSSCSDQPTPTTQQKPQ) the composition is skewed to low complexity. Polar residues-rich tracts occupy residues 239-257 (SSAK…THSV) and 303-316 (THIQ…TSDS). Repeat copies occupy residues 353–358 (RGRGRG) and 380–385 (RGRGRG). Residues 353 to 385 (RGRGRGEDFSWRGQRGRWFRGQGNNSNRGRGRG) are 2 X 6 AA repeats of R-G-R-G-R-G. The tract at residues 368–387 (GRWFRGQGNNSNRGRGRGDS) is disordered. The span at 371–380 (FRGQGNNSNR) shows a compositional bias: low complexity. The region spanning 425-523 (DYSSLPLLAA…VMLNWNTLIE (99 aa)) is the Tudor; atypical domain.

This sequence belongs to the coilin family. In terms of tissue distribution, expressed in both oocytes and somatic cells.

It is found in the nucleus. The protein is Coilin (coil) of Xenopus laevis (African clawed frog).